The primary structure comprises 115 residues: Selenoprotein K homolog (115 aa).

The helical transmembrane segment at 29–49 (FIWGILNQITFFFSTLIGGTV) threads the bilayer. Residues 48–115 (TVEPRRRPNN…NSASGSUGPK (68 aa)) are disordered. Residues 58-84 (QGGGRRLAGFDGNGNVTGGSGVGGSGP) are compositionally biased toward gly residues. Residues 104-115 (ACNSASGSUGPK) show a composition bias toward polar residues. Residue U112 is a non-standard amino acid, selenocysteine.

The protein belongs to the selenoprotein K family.

The protein localises to the membrane. The protein is Selenoprotein K homolog (selk) of Dictyostelium discoideum (Social amoeba).